The following is a 181-amino-acid chain: ATP synthase subunit delta (181 aa).

Belongs to the ATPase delta chain family. As to quaternary structure, F-type ATPases have 2 components, F(1) - the catalytic core - and F(0) - the membrane proton channel. F(1) has five subunits: alpha(3), beta(3), gamma(1), delta(1), epsilon(1). F(0) has three main subunits: a(1), b(2) and c(10-14). The alpha and beta chains form an alternating ring which encloses part of the gamma chain. F(1) is attached to F(0) by a central stalk formed by the gamma and epsilon chains, while a peripheral stalk is formed by the delta and b chains.

It localises to the cell inner membrane. In terms of biological role, f(1)F(0) ATP synthase produces ATP from ADP in the presence of a proton or sodium gradient. F-type ATPases consist of two structural domains, F(1) containing the extramembraneous catalytic core and F(0) containing the membrane proton channel, linked together by a central stalk and a peripheral stalk. During catalysis, ATP synthesis in the catalytic domain of F(1) is coupled via a rotary mechanism of the central stalk subunits to proton translocation. Functionally, this protein is part of the stalk that links CF(0) to CF(1). It either transmits conformational changes from CF(0) to CF(1) or is implicated in proton conduction. This Syntrophus aciditrophicus (strain SB) protein is ATP synthase subunit delta.